Consider the following 5207-residue polypeptide: MECPSCQHVSKEETPKFCSQCGERLPPAAPIADSENNNSTMASASEGEMECGQELKEEGGPCLFPGSDSWQENPEEPCSKASWTVQESKKKKRKKKKKGNKSASSELASLPLSPASPCHLTLLSNPWPQDTALPHSQAQQSGPTGQPSQPPGTATTPLEGDGLSAPTEVGDSPLQAQALGEAGVATGSEAQSSPQFQDHTEGEDQDASIPSGGRGLSQEGTGPPTSAGEGHSRTEDAAQELLLPESKGGSSEPGTELQTTEQQAGASASMAVDAVAEPANAVKGAGKEMKEKTQRMKQPPATTPPFKTHCQEAETKTKDEMAAAEEKVGKNEQGEPEDLKKPEGKNRSAAAVKNEKEQKNQEADVQEVKASTLSPGGGVTVFFHAIISLHFPFNPDLHKVFIRGGEEFGESKWDSNICELHYTRDLGHDRVLVEGIVCISKKHLDKYIPYKYVIYNGESFEYEFIYKHQQKKGEYVNRCLFIKSSLLGSGDWHQYYDIVYMKPHGRLQKVMNHITDGPRKDLVKGKQIAAALMLDSTFSILQTWDTINLNSFFTQFEQFCFVLQQPMIYEGQAQLWTDLQYREKEVKRYLWQHLKKHVVPLPDGKSTDFLPVDCPVRSKLKTGLIVLFVVEKIELLLEGSLDWLCHLLTSDASSPDEFHRDLSHILGIPQSWRLYLVNLCQRCMDTRTYTWLGALPVLHCCMELAPRHKDAWRQPEDTWAALEGLSFSPFREQMLDTSSLLQFMREKQHLLSIDEPLFRSWFSLLPLSHLVMYMENFIEHLGRFPAHILDCLSGIYYRLPGLEQVLNTQDVQDVQNVQNILEMLLRLLDTYRDKIPEEALSPSYLTVCLKLHEAICSSTKLLKFYELPALSAEIVCRMIRLLSLVDSAGQRDETGNNSVQTVFQGTLAATKRWLREVFTKNMLTSSGASFTYVKEIEVWRRLVEIQFPAEHGWKESLLGDMEWRLTKEEPLSQITAYCNSCWDTKGLEDSVAKTFEKCIIEAVSSACQSQTSILQGFSYSDLRKFGIVLSAVITKSWPRTADNFNDILKHLLTLADVKHVFRLCGTDEKILANVTEDAKRLIAVADSVLTKVVGDLLSGTILVGQLELIIKHKNQFLDIWQLREKSLSPQDEQCAVEEALDWRREELLLLKKEKRCVDSLLKMCGNVKHLIQVDFGVLAVRHSQDLSSKRLNDTVTVRLSTSSNSQRATHYHLSSQVQEMAGKIDLLRDSHIFQLFWREAAEPLSEPKEDQEAAELLSEPEEESERHILELEEVYDYLYQPSYRKFIKLHQDLKSGEVTLAEIDVIFKDFVNKYTDLDSELKIMCTVDHQDQRDWIKDRVEQIKEYHHLHQAVHAAKVILQVKESLGLNGDFSVLNTLLNFTDNFDDFRRETLDQINQELIQAKKLLQDISEARCKGLQALSLRKEFICWVREALGGINELKVFVDLASISAGENDIDVDRVACFHDAVQGYASLLFKLDPSVDFSAFMKHLKKLWKALDKDQYLPRKLCDSARNLEWLKTVNESHGSVERSSLTLATAINQRGIYVIQAPKGGQKISPDTVLHLILPESPGSHEESREYSLEEVKELLNKLMLMSGKKDRNNTEVERFSEVFCSVQRLSQAFIDLHSAGNMLFRTWIAMAYCSPKQGVSLQMDFGLDLVTELKEGGDVTELLAALCRQMEHFLDSWKRFVTQKRMEHFYLNFYTAEQLVYLSTELRKQPPSDAALTMLSFIKSNCTLRDVLRASVGCGSEAARYRMRRVMEELPLMLLSEFSLVDKLRIIMEQSMRCLPAFLPDCLDLETLGHCLAHLAGMGGSPVERCLPRGLQVGQPNLVVCGHSEVLPAALAVYMQTPSQPLPTYDEVLLCTPATTFEEVALLLRRCLTLGSLGHKVYSLLFADQLSYEVARQAEELFHNLCTQQHREDYQLVMVCDGDWEHCYLPSAFSQHKVFVTPQAPLEAIQAYLAGHYRVPKQTLSAAAVFNDRLCVGIVASERAGVGKSLYVKRLHDKMKMQLNVKNVPLKTIRLIDPQVDESRVLGALLPFLDAQYQKVPVLFHLDVTSSVQTGIWVFLFKLLILQYLMDINGKMWLRNPCHLYIVEILERRTSVPSRSSSALRTRVPQFSFLDIFPKVTCRPPKEVIDMELSALRSDTEPGMDLWEFCSETFQRPYQYLRRFNQNQDLDTFQYQEGSVEGTPEECLQHFLFHCGVINPSWSELRNFARFLNYQLRDCEASLFCNPSFIGDTLRGFKKFVVTFMIFMARDFATPSLHTSDQSPGKHMVTMDGVREEDLAPFSLRKRWESEPHPYVFFNDDHTTMTFIGFHLQPNINGSVDAISHLTGKVIKRDVMTRDLYQGLLLQRVPFNVDFDKLPRHKKLERLCLTLGIPQATDPDKTYELTTDNMLKILAIEMRFRCGIPVIIMGETGCGKTRLIKFLSDLRRGGTNADTIKLVKVHGGTTADMIYSRVREAENVAFANKDQHQLDTILFFDEANTTEAISCIKEVLCDHMVDGQPLAEDSGLHIIAACNPYRKHSEEMICRLESAGLGYRVSMEETADRLGSIPLRQLVYRVHALPPSLIPLVWDFGQLSDVAEKLYIQQIVQRLVESISLDENGTRVITEVLCASQGFMRKTEDECSFVSLRDVERCVKVFRWFHEHSAMLLAQLNAFLSKSSVSKNHTERDPVLWSLMLAIGVCYHASLEKKDSYRKAIARFFPKPYDDSRLLLDEITRAQDLFLDGVPLRKTIAKNLALKENVFMMVVCIELKIPLFLVGKPGSSKSLAKTIVADAMQGPAAYSDLFRSLKQVHLVSFQCSPHSTPQGIISTFRQCARFQQGKDLQQYVSVVVLDEVGLAEDSPKMPLKTLHPLLEDGCIEDDPAPHKKVGFVGISNWALDPAKMNRGIFVSRGSPNETELIESAKGICSSDILVQDRVQGYFASFAKAYETVCKRQDKEFFGLRDYYSLIKMVFAAAKASNRKPSPQDIAQAVLRNFSGKDDIQALDIFLANLPEAKCSEEVSPMQLIKQNIFGPSQKVPGGEQEDAESRYLLVLTKNYVALQILQQTFFEGDQQPEIIFGSGFPKDQEYTQLCRNINRVKICMETGKMVLLLNLQNLYESLYDALNQYYVHLGGQKYVDLGLGTHRVKCRVHPNFRLIVIEEKDVVYKHFPIPLINRLEKHYLDINTVLEKWQKSIVEELCAWVEKFINVKAHHFQKRHKYSPSDVFIGYHSDACASVVLQVIERQGPRALTEELHQKVSEEAKSILLNCATPDAVVRLSAYSLGGFAAEWLSQEYFHRQRHNSFADFLQAHLHTADLERHAIFTEITTFSRLLTSHDCEILESEVTGRAPKPTLLWLQQFDTEYSFLKEVRNCLTNTAKCKILIFQTDFEDGIRSAQLIASAKYSVINEINKIRENEDRIFVYFITKLSRVGRGTAYVGFHGGLWQSVHIDDLRRSTLMVSDVTRLQHVTISQLFAPGDLPELGLEHRAEDGHEEAMETEASTSGEVAEVAEEAMETESSEKVGKETSELGGSDVSILDTTRLLRSCVQSAVGMLRDQNESCTRNMRRVVLLLGLLNEDDACHASFLRVSKMRLSVFLKKQEESQFHPLEWLAREACNQDALQEAGTFRHTLWKRVQGAVTPLLASMISFIDRDGNLELLTRPDTPPWARDLWMFIFSDTMLLNIPLVMNNERHKGEMAYIVVQNHMNLSENASNNVPFSWKIKDYLEELWVQAQYITDAEGLPKKFVDIFQQTPLGRFLAQLHGEPQQELLQCYLKDFILLTMRVSTEEELKFLQMALWSCTRKLKAASEAPEEEVSLPWVHLAYQRFRSRLQNFSRILTIYPQVLHSLMEARWNHELAGCEMTLDAFAAMACTEMLTRNTLKPSPQAWLQLVKNLSMPLELICSDEHMQGSGSLAQAVIREVRAQWSRIFSTALFVEHVLLGTESRVPELQGLVTEHVFLLDKCLRENSDVKTHGPFEAVMRTLCECKETASKTLSRFGIQPCSICLGDAKDPVCLPCDHVHCLRCLRAWFASEQMICPYCLTALPDEFSPAVSQAHREAIEKHARFRQMCNSFFVDLVSTICFKDNAPPEKEVIESLLSLLFVQKGRLRDAAQRHCEHTKSLSPFNDVVDKTPVIRSVILKLLLKYSFHDVKDYIQEYLTLLKKKAFITEDKTELYMLFINCLEDSILEKTSAYSRNDELNHLEEEGRFLKAYSPASRGREPANEASVEYLQEVARIRLCLDRAADFLSEPEGGPEMAKEKQCYLQQVKQFCIRVENDWHRVYLVRKLSSQRGMEFVQGLSKPGRPHQWVFPKDVVKQQGLRQDHPGQMDRYLVYGDEYKALRDAVAKAVLECKPLGIKTALKACKTPQSQQSAYFLLTLFREVAILYRSHNASLHPTPEQCEAVSKFIGECKILSPPDISRFATSLVDNSVPLLRAGPSDSNLDGTVTEMAIHAAAVLLCGQNELLEPLKNLAFSPATMAHAFLPTMPEDLLAQARRWKGLERVHWYTCPNGHPCSVGECGRPMEQSICIDCHAPIGGIDHKPRDGFHLVKDKADRTQTGHVLGNPQRRDVVTCDRGLPPVVFLLIRLLTHLALLLGASQSSQALINIIKPPVRDPKGFLQQHILKDLEQLAKMLGHSADETIGVVHLVLRRLLQEQHQLSSRRLLNFDTELSTKEMRNNWEKEIAAVISPELEHLDKTLPTMNNLISQDKRISSNPVAKIIYGDPVTFLPHLPRKSVVHCSKIWSCRKRITVEYLQHIVEQKNGKERVPILWHFLQKEAELRLVKFLPEILALQRDLVKQFQNVQQVEYSSIRGFLSKHSSDGLRQLLHNRITVFLSTWNKLRRSLETNGEINLPKDYCSTDLDLDTEFEILLPRRRGLGLCATALVSYLIRLHNEIVYAVEKLSKENNSYSVDAAEVTELHVISYEVERDLTPLILSNCQYQVEEGRETVQEFDLEKIQRQIVSRFLQGKPRLSLKGIPTLVYRHDWNYEHLFMDIKNKMAQDSLPSSVISAISGQLQSYSDACEVLSVVEVTLGFLSTAGGDPNMQLNVYTQDILQMGDQTIHVLKALNRCQLKHTIALWQFLSAHKSEQLLRLHKEPFGEISSRYKADLSPENAKLLSTFLNQTGLDAFLLELHEMIILKLKNPQTQTEERFRPQWSLRDTLVSYMQTKESEILPEMASQFPEEILLASCVSVWKTAAVLKWNREMR.

Disordered regions lie at residues Met-1–Gln-20 and Pro-27–Val-365. A compositionally biased stretch (polar residues) spans Ser-34–Ser-43. A compositionally biased stretch (basic residues) spans Lys-89–Asn-100. Composition is skewed to low complexity over residues Lys-101–Pro-117 and Ser-136–Pro-157. Positions Ser-188 to Gln-197 are enriched in polar residues. Residues Ser-208 and Ser-217 each carry the phosphoserine modification. Polar residues predominate over residues Gly-248 to Ala-266. Basic and acidic residues-rich tracts occupy residues Ala-285–Gln-294, His-309–Asn-346, and Lys-353–Glu-362. Residues Glu-343–Ser-374 adopt a coiled-coil conformation. Lys-1151 is covalently cross-linked (Glycyl lysine isopeptide (Lys-Gly) (interchain with G-Cter in SUMO2)). Phosphoserine is present on Ser-1258. ATP contacts are provided by residues Gly-1995–Leu-2000, Glu-2098, Asp-2155, and Arg-2216. Ser-2273 is subject to Phosphoserine. 2 residues coordinate ATP: Lys-2499 and Ser-2574. 10 residues coordinate Zn(2+): Cys-3997, Cys-4000, Cys-4012, His-4014, Cys-4017, Cys-4020, Cys-4032, Cys-4035, Cys-4505, and His-4509. Residues Cys-3997 to Leu-4036 form an RING-type zinc finger. The segment at Met-4483–Thr-4555 adopts an RZ-type zinc-finger fold. The active-site Nucleophile; for E3 ubiquitin-lipopolysaccharide ligase activity is the Cys-4516. Residues Cys-4525 and Cys-4528 each coordinate Zn(2+).

It belongs to the AAA ATPase family. As to quaternary structure, monomer. Interacts with UBE2L3/UBCH7; UBE2L3/UBCH7 is the most efficient ubiquitin-conjugating enzyme E2 for the ubiquitin ligase activity. Interacts with UBE2N/UBC13; promoting 'Lys-63'-linked ubiquitination of target proteins. In terms of assembly, (Microbial infection) Interacts with M.tuberculosis protein Rv3655c, which impairs caspase-8 activation and suppresses macrophage apoptosis by blocking the extrinsic pathway. Post-translationally, autoubiquitinated. Widely expressed (at protein level). In terms of tissue distribution, major isoform detected in all tissues examined. As to expression, minor isoform with restricted expression.

The protein localises to the cytoplasm. It localises to the cytosol. Its subcellular location is the lipid droplet. It carries out the reaction S-ubiquitinyl-[E2 ubiquitin-conjugating enzyme]-L-cysteine + [acceptor protein]-L-lysine = [E2 ubiquitin-conjugating enzyme]-L-cysteine + N(6)-ubiquitinyl-[acceptor protein]-L-lysine.. The catalysed reaction is ATP + H2O = ADP + phosphate + H(+). The protein operates within protein modification; protein ubiquitination. Atypical E3 ubiquitin ligase that can catalyze ubiquitination of both proteins and lipids, and which is involved in various processes, such as lipid metabolism, angiogenesis and cell-autonomous immunity. Acts as a key immune sensor by catalyzing ubiquitination of the lipid A moiety of bacterial lipopolysaccharide (LPS) via its RZ-type zinc-finger: restricts the proliferation of cytosolic bacteria, such as Salmonella, by generating the bacterial ubiquitin coat through the ubiquitination of LPS. Also acts indirectly by mediating the recruitment of the LUBAC complex, which conjugates linear polyubiquitin chains. Ubiquitination of LPS triggers cell-autonomous immunity, such as antibacterial autophagy, leading to degradation of the microbial invader. Involved in lipid metabolism by regulating fat storage and lipid droplet formation; act by inhibiting the lipolytic process. Also regulates lipotoxicity by inhibiting desaturation of fatty acids. Also acts as an E3 ubiquitin-protein ligase via its RING-type zinc finger: mediates 'Lys-63'-linked ubiquitination of target proteins. Involved in the non-canonical Wnt signaling pathway in vascular development: acts by mediating ubiquitination and degradation of FLNA and NFATC2 downstream of RSPO3, leading to inhibit the non-canonical Wnt signaling pathway and promoting vessel regression. Also has ATPase activity; ATPase activity is required for ubiquitination of LPS. This Homo sapiens (Human) protein is E3 ubiquitin-protein ligase RNF213.